A 209-amino-acid polypeptide reads, in one-letter code: Outer-membrane lipoprotein carrier protein (209 aa).

An N-terminal signal peptide occupies residues methionine 1 to alanine 21.

The protein belongs to the LolA family. Monomer.

It localises to the periplasm. Its function is as follows. Participates in the translocation of lipoproteins from the inner membrane to the outer membrane. Only forms a complex with a lipoprotein if the residue after the N-terminal Cys is not an aspartate (The Asp acts as a targeting signal to indicate that the lipoprotein should stay in the inner membrane). This chain is Outer-membrane lipoprotein carrier protein, found in Hahella chejuensis (strain KCTC 2396).